The chain runs to 440 residues: Probable D-serine dehydratase (440 aa).

The residue at position 120 (Lys-120) is an N6-(pyridoxal phosphate)lysine.

The protein belongs to the serine/threonine dehydratase family. DsdA subfamily. Pyridoxal 5'-phosphate is required as a cofactor.

It catalyses the reaction D-serine = pyruvate + NH4(+). This chain is Probable D-serine dehydratase, found in Shouchella clausii (strain KSM-K16) (Alkalihalobacillus clausii).